Here is a 108-residue protein sequence, read N- to C-terminus: UPF0060 membrane protein Sca_1835 (108 aa).

4 helical membrane passes run 5–25, 34–54, 60–80, and 84–104; these read ILIFILAGLCEIGGGYLIWLW, FGLLGGILLISYGIVATFQVF, VYAAYGGVFIVMSILWGYVFD, and PDKYDVLGAIVCIIGVLIMLL.

This sequence belongs to the UPF0060 family.

Its subcellular location is the cell membrane. In Staphylococcus carnosus (strain TM300), this protein is UPF0060 membrane protein Sca_1835.